The sequence spans 545 residues: Transducer protein Htr7 (545 aa).

A run of 3 helical transmembrane segments spans residues 10–30 (AVVA…AAAL), 44–64 (FWMA…SLML), and 80–100 (PLMA…LAIV). The tract at residues 111–157 (AQRRQEAEEERAEAERAREKAEQKQAEAERQTAEAESAKQDARERSA) is disordered. Residues 123–157 (EAERAREKAEQKQAEAERQTAEAESAKQDARERSA) are compositionally biased toward basic and acidic residues. Positions 164 to 217 (ADLESQATEVGATLEAASDGDLTARVDATTDNAEIAEVATVVNDMLTTMERTID) constitute an HAMP domain. Residues 236 to 476 (GAKEIQDASQ…RVVSSVDDIA (241 aa)) form the Methyl-accepting transducer domain. A Glutamate methyl ester (Glu) modification is found at Glu281. Positions 521–545 (LNEFRTEATGTAHGEATDAPAGQSD) are disordered. A compositionally biased stretch (low complexity) spans 527–539 (EATGTAHGEATDA).

Belongs to the methyl-accepting chemotaxis (MCP) protein family. In terms of processing, methylated by CheR.

The protein resides in the cell membrane. Functionally, potentially involved in chemo- or phototactic signal transduction. The sequence is that of Transducer protein Htr7 (htr7) from Halobacterium salinarum (strain ATCC 29341 / DSM 671 / R1).